The sequence spans 155 residues: Mitochondrial import protein 1 (155 aa).

Belongs to the MIM1 family.

It localises to the mitochondrion outer membrane. In terms of biological role, required for the assembly of the TOM (translocase of outer membrane) receptor complex, which is responsible for the recognition and translocation of cytosolically synthesized mitochondrial preproteins. The polypeptide is Mitochondrial import protein 1 (Eremothecium gossypii (strain ATCC 10895 / CBS 109.51 / FGSC 9923 / NRRL Y-1056) (Yeast)).